Reading from the N-terminus, the 307-residue chain is Pantothenate kinase (307 aa).

An ATP-binding site is contributed by 90 to 97; the sequence is GSVAVGKS.

It belongs to the prokaryotic pantothenate kinase family.

It is found in the cytoplasm. It catalyses the reaction (R)-pantothenate + ATP = (R)-4'-phosphopantothenate + ADP + H(+). Its pathway is cofactor biosynthesis; coenzyme A biosynthesis; CoA from (R)-pantothenate: step 1/5. In Levilactobacillus brevis (strain ATCC 367 / BCRC 12310 / CIP 105137 / JCM 1170 / LMG 11437 / NCIMB 947 / NCTC 947) (Lactobacillus brevis), this protein is Pantothenate kinase.